We begin with the raw amino-acid sequence, 165 residues long: Lipoprotein signal peptidase (165 aa).

2 consecutive transmembrane segments (helical) span residues Leu64 to Met84 and Gly88 to Val108. Active-site residues include Asp118 and Asp136. The helical transmembrane segment at Ser128–Val148 threads the bilayer.

This sequence belongs to the peptidase A8 family.

It localises to the cell inner membrane. The catalysed reaction is Release of signal peptides from bacterial membrane prolipoproteins. Hydrolyzes -Xaa-Yaa-Zaa-|-(S,diacylglyceryl)Cys-, in which Xaa is hydrophobic (preferably Leu), and Yaa (Ala or Ser) and Zaa (Gly or Ala) have small, neutral side chains.. It functions in the pathway protein modification; lipoprotein biosynthesis (signal peptide cleavage). Functionally, this protein specifically catalyzes the removal of signal peptides from prolipoproteins. The polypeptide is Lipoprotein signal peptidase (Methylobacterium sp. (strain 4-46)).